Reading from the N-terminus, the 266-residue chain is 3-methyl-2-oxobutanoate hydroxymethyltransferase (266 aa).

Mg(2+) is bound by residues D43 and D82. 3-methyl-2-oxobutanoate-binding positions include 43-44 (DS), D82, and K110. E112 is a Mg(2+) binding site. Catalysis depends on E179, which acts as the Proton acceptor.

Belongs to the PanB family. As to quaternary structure, homodecamer; pentamer of dimers. Mg(2+) serves as cofactor.

It is found in the cytoplasm. It carries out the reaction 3-methyl-2-oxobutanoate + (6R)-5,10-methylene-5,6,7,8-tetrahydrofolate + H2O = 2-dehydropantoate + (6S)-5,6,7,8-tetrahydrofolate. The protein operates within cofactor biosynthesis; (R)-pantothenate biosynthesis; (R)-pantoate from 3-methyl-2-oxobutanoate: step 1/2. Functionally, catalyzes the reversible reaction in which hydroxymethyl group from 5,10-methylenetetrahydrofolate is transferred onto alpha-ketoisovalerate to form ketopantoate. The polypeptide is 3-methyl-2-oxobutanoate hydroxymethyltransferase (Psychrobacter cryohalolentis (strain ATCC BAA-1226 / DSM 17306 / VKM B-2378 / K5)).